Consider the following 62-residue polypeptide: Potassium channel toxin alpha-KTx 18.3 (62 aa).

Residues 1 to 26 (MHFSGVAFILISMVLIGSIFETTVEA) form the signal peptide. Disulfide bonds link C34–C53, C39–C58, and C43–C60.

The protein belongs to the short scorpion toxin superfamily. Potassium channel inhibitor family. Alpha-KTx 18 subfamily. Expressed by the venom gland.

It localises to the secreted. Its function is as follows. Probable voltage-gated potassium channel inhibitor. This chain is Potassium channel toxin alpha-KTx 18.3, found in Tityus discrepans (Venezuelan scorpion).